Reading from the N-terminus, the 337-residue chain is LIX1-like protein (337 aa).

The tract at residues 1–64 is disordered; sequence METMRAQRLQ…PLLLSGAPGL (64 aa). Residues 26 to 38 are compositionally biased toward low complexity; sequence PGVTGAAAATATP. Positions 39 to 56 are enriched in pro residues; sequence PAGPPPAPPPPAPPPPPL.

Belongs to the LIX1 family.

The chain is LIX1-like protein (LIX1L) from Homo sapiens (Human).